The following is a 250-amino-acid chain: Probable transcriptional regulatory protein RC1_1808 (250 aa).

Residues 1–21 are disordered; that stretch reads MAGHSQFKNIMHRKGAQDAKR.

Belongs to the TACO1 family.

Its subcellular location is the cytoplasm. The sequence is that of Probable transcriptional regulatory protein RC1_1808 from Rhodospirillum centenum (strain ATCC 51521 / SW).